We begin with the raw amino-acid sequence, 101 residues long: Protein RnfH (101 aa).

It belongs to the UPF0125 (RnfH) family.

This chain is Protein RnfH, found in Pseudomonas aeruginosa (strain LESB58).